A 93-amino-acid polypeptide reads, in one-letter code: NAD(P)H-quinone oxidoreductase subunit 4L, chloroplastic (93 aa).

A run of 2 helical transmembrane segments spans residues 1–21 (MLEH…SGLI) and 60–80 (IFAI…LSIA).

The protein belongs to the complex I subunit 4L family. As to quaternary structure, NDH is composed of at least 16 different subunits, 5 of which are encoded in the nucleus.

The protein localises to the plastid. It localises to the chloroplast thylakoid membrane. It carries out the reaction a plastoquinone + NADH + (n+1) H(+)(in) = a plastoquinol + NAD(+) + n H(+)(out). It catalyses the reaction a plastoquinone + NADPH + (n+1) H(+)(in) = a plastoquinol + NADP(+) + n H(+)(out). Functionally, NDH shuttles electrons from NAD(P)H:plastoquinone, via FMN and iron-sulfur (Fe-S) centers, to quinones in the photosynthetic chain and possibly in a chloroplast respiratory chain. The immediate electron acceptor for the enzyme in this species is believed to be plastoquinone. Couples the redox reaction to proton translocation, and thus conserves the redox energy in a proton gradient. This is NAD(P)H-quinone oxidoreductase subunit 4L, chloroplastic from Anthoceros angustus (Hornwort).